The chain runs to 393 residues: Digeranylgeranylglycerophospholipid reductase 2 (393 aa).

9 residues coordinate FAD: Asp33, Cys44, Ala45, Gly47, Arg100, Ala124, Asp280, Gly292, and Ile293.

The protein belongs to the geranylgeranyl reductase family. DGGGPL reductase subfamily. FAD is required as a cofactor.

It carries out the reaction a 2,3-bis-O-phytanyl-sn-glycerol 1-phospholipid + 8 A = a 2,3-bis-O-(geranylgeranyl)-sn-glycerol 1-phospholipid + 8 AH2. The catalysed reaction is 2,3-bis-O-(phytanyl)-sn-glycerol 1-phosphate + 8 A = 2,3-bis-O-(geranylgeranyl)-sn-glycerol 1-phosphate + 8 AH2. The enzyme catalyses CDP-2,3-bis-O-(geranylgeranyl)-sn-glycerol + 8 AH2 = CDP-2,3-bis-O-(phytanyl)-sn-glycerol + 8 A. It catalyses the reaction archaetidylserine + 8 AH2 = 2,3-bis-O-phytanyl-sn-glycero-3-phospho-L-serine + 8 A. It participates in membrane lipid metabolism; glycerophospholipid metabolism. In terms of biological role, is involved in the reduction of 2,3-digeranylgeranylglycerophospholipids (unsaturated archaeols) into 2,3-diphytanylglycerophospholipids (saturated archaeols) in the biosynthesis of archaeal membrane lipids. Catalyzes the formation of archaetidic acid (2,3-di-O-phytanyl-sn-glyceryl phosphate) from 2,3-di-O-geranylgeranylglyceryl phosphate (DGGGP) via the hydrogenation of each double bond of the isoprenoid chains. Is also probably able to reduce double bonds of geranyl groups in CDP-2,3-bis-O-(geranylgeranyl)-sn-glycerol and archaetidylserine, thus acting at various stages in the biosynthesis of archaeal membrane lipids. This is Digeranylgeranylglycerophospholipid reductase 2 from Methanosphaera stadtmanae (strain ATCC 43021 / DSM 3091 / JCM 11832 / MCB-3).